A 304-amino-acid chain; its full sequence is UDP-N-acetylenolpyruvoylglucosamine reductase (304 aa).

Residues 33–198 (IGGPADLLVM…LEVVLALQEG (166 aa)) enclose the FAD-binding PCMH-type domain. R177 is an active-site residue. S227 functions as the Proton donor in the catalytic mechanism. Residue E297 is part of the active site.

This sequence belongs to the MurB family. The cofactor is FAD.

The protein resides in the cytoplasm. The enzyme catalyses UDP-N-acetyl-alpha-D-muramate + NADP(+) = UDP-N-acetyl-3-O-(1-carboxyvinyl)-alpha-D-glucosamine + NADPH + H(+). It functions in the pathway cell wall biogenesis; peptidoglycan biosynthesis. Functionally, cell wall formation. In Alkaliphilus metalliredigens (strain QYMF), this protein is UDP-N-acetylenolpyruvoylglucosamine reductase.